A 367-amino-acid polypeptide reads, in one-letter code: Heme A synthase (367 aa).

5 consecutive transmembrane segments (helical) span residues Gly-12–Gly-32, Leu-99–Gly-119, Leu-127–Val-147, Leu-163–Gly-183, and Ala-198–Ala-218. Residue His-264 participates in heme binding. Transmembrane regions (helical) follow at residues Val-266–Gly-286, Gly-296–Val-316, and Pro-317–Val-337. His-324 is a heme binding site.

It belongs to the COX15/CtaA family. Type 2 subfamily. Interacts with CtaB. Heme b serves as cofactor.

Its subcellular location is the cell membrane. The enzyme catalyses Fe(II)-heme o + 2 A + H2O = Fe(II)-heme a + 2 AH2. It functions in the pathway porphyrin-containing compound metabolism; heme A biosynthesis; heme A from heme O: step 1/1. Catalyzes the conversion of heme O to heme A by two successive hydroxylations of the methyl group at C8. The first hydroxylation forms heme I, the second hydroxylation results in an unstable dihydroxymethyl group, which spontaneously dehydrates, resulting in the formyl group of heme A. The protein is Heme A synthase of Methylobacterium radiotolerans (strain ATCC 27329 / DSM 1819 / JCM 2831 / NBRC 15690 / NCIMB 10815 / 0-1).